A 912-amino-acid chain; its full sequence is DNA ligase 4 (912 aa).

ATP is bound by residues E271, T272, K273, L274, R278, E331, K345, F367, E427, K432, K449, and K451. Residue K273 is the N6-AMP-lysine intermediate of the active site. E331 is a Mg(2+) binding site. E427 contacts Mg(2+). The tract at residues 610 to 620 is required for catalytic activity; it reads LATKHLHVGDD. 2 BRCT domains span residues 654-743 and 846-912; these read KVSN…PRFM and LRFH…QYLL.

Belongs to the ATP-dependent DNA ligase family. Interacts with XRCC4; the LIG4-XRCC4 subcomplex has a 1:2 stoichiometry and XRCC4 is required for LIG4 stability. Component of the core long-range non-homologous end joining (NHEJ) complex (also named DNA-PK complex) composed of PRKDC, LIG4, XRCC4, XRCC6/Ku70, XRCC5/Ku86 and NHEJ1/XLF. Additional component of the NHEJ complex includes PAXX. Following autophosphorylation, PRKDC dissociates from DNA, leading to formation of the short-range NHEJ complex, composed of LIG4, XRCC4, XRCC6/Ku70, XRCC5/Ku86 and NHEJ1/XLF. Interacts with DCLRE1C; the interaction is direct. Interacts with APLF. Mg(2+) is required as a cofactor.

The protein localises to the nucleus. It catalyses the reaction ATP + (deoxyribonucleotide)n-3'-hydroxyl + 5'-phospho-(deoxyribonucleotide)m = (deoxyribonucleotide)n+m + AMP + diphosphate.. DNA ligase involved in DNA non-homologous end joining (NHEJ); required for double-strand break (DSB) repair and V(D)J recombination. Catalyzes the NHEJ ligation step of the broken DNA during DSB repair by resealing the DNA breaks after the gap filling is completed. Joins single-strand breaks in a double-stranded polydeoxynucleotide in an ATP-dependent reaction. LIG4 is mechanistically flexible: it can ligate nicks as well as compatible DNA overhangs alone, while in the presence of XRCC4, it can ligate ends with 2-nucleotides (nt) microhomology and 1-nt gaps. Forms a subcomplex with XRCC4; the LIG4-XRCC4 subcomplex is responsible for the NHEJ ligation step and XRCC4 enhances the joining activity of LIG4. Binding of the LIG4-XRCC4 complex to DNA ends is dependent on the assembly of the DNA-dependent protein kinase complex DNA-PK to these DNA ends. LIG4 regulates nuclear localization of XRCC4. This is DNA ligase 4 from Cricetulus griseus (Chinese hamster).